A 1535-amino-acid polypeptide reads, in one-letter code: Lysine-specific demethylase 5D (1535 aa).

Residues 14-55 (CPVFEPSWAEFQDPLGYIAKIRPIAEKSGICKIRPPADWQPP) enclose the JmjN domain. An ARID domain is found at 79-169 (TRVKLNYLDQ…IIYPYEMFQS (91 aa)). The interval 192 to 227 (PHSIPLRQSVQPSKFSSYSRRAKRLQPDPEPTEEDI) is disordered. Residues 197-210 (LRQSVQPSKFSSYS) are compositionally biased toward polar residues. Glycyl lysine isopeptide (Lys-Gly) (interchain with G-Cter in SUMO2) cross-links involve residues lysine 205, lysine 229, lysine 244, and lysine 272. Phosphoserine is present on residues serine 291 and serine 307. Residues 314 to 364 (SYICQVCSRGDEDDKLLFCDGCDDNYHIFCLLPPLPEIPRGIWRCPKCILA) form a PHD-type 1 zinc finger. Tyrosine 430 is a 2-oxoglutarate binding site. In terms of domain architecture, JmjC spans 458-624 (EYATSGWNLN…AGRQCIEHYR (167 aa)). The Fe cation site is built by histidine 504 and glutamate 506. Residues serine 512, asparagine 514, and lysine 522 each contribute to the 2-oxoglutarate site. Histidine 592 serves as a coordination point for Fe cation. The segment at 697–749 (CIKCKTTCFLSALACYDCPDGLVCLSHINDLCKCSSSRQYLRYRYTLDELPTM) adopts a C5HC2 zinc-finger fold. Serine 884 carries the phosphoserine modification. A PHD-type 2 zinc finger spans residues 1174–1235 (ICVCGQVPAG…DTKFLCPLCM (62 aa)). Phosphoserine is present on serine 1342. A disordered region spans residues 1425–1519 (HQGSRTRSRA…KDSGSSAACP (95 aa)). Positions 1428-1441 (SRTRSRALERRRRQ) are enriched in basic residues. Residues 1473–1487 (GREEEHYQEKADREN) show a composition bias toward basic and acidic residues. Residues 1490 to 1517 (LTPSTDHSPSLKGNQNSLQHKDSGSSAA) show a composition bias toward polar residues.

This sequence belongs to the JARID1 histone demethylase family. In terms of assembly, interacts withPCGF6, MSH5, ZMYND8, AR. L-ascorbate is required as a cofactor. Fe(2+) serves as cofactor.

The protein resides in the nucleus. It catalyses the reaction N(6),N(6),N(6)-trimethyl-L-lysyl(4)-[histone H3] + 3 2-oxoglutarate + 3 O2 = L-lysyl(4)-[histone H3] + 3 formaldehyde + 3 succinate + 3 CO2. Functionally, histone demethylase that specifically demethylates 'Lys-4' of histone H3, thereby playing a central role in histone code. Does not demethylate histone H3 'Lys-9', H3 'Lys-27', H3 'Lys-36', H3 'Lys-79' or H4 'Lys-20'. Demethylates trimethylated and dimethylated but not monomethylated H3 'Lys-4'. May play a role in spermatogenesis. Involved in transcriptional repression of diverse metastasis-associated genes; in this function seems to cooperate with ZMYND8. Suppresses prostate cancer cell invasion. Regulates androgen receptor (AR) transcriptional activity by demethylating H3K4me3 active transcription marks. This Pan troglodytes (Chimpanzee) protein is Lysine-specific demethylase 5D (KDM5D).